Here is a 563-residue protein sequence, read N- to C-terminus: Lengsin (563 aa).

Residues 1-115 (MTDEGDLAQE…PNTDPTRYNA (115 aa)) form a disordered region. Over residues 26–37 (SKLRRARRKVTK) the composition is skewed to basic residues. Polar residues-rich tracts occupy residues 51-62 (ANSSEMSRNQIA) and 105-115 (SPNTDPTRYNA). The region spanning 137–231 (NHLQFVRFEA…VICDTFTVTG (95 aa)) is the GS beta-grasp domain. The 326-residue stretch at 238-563 (PRYIAKRQLR…EGNKFLEYFI (326 aa)) folds into the GS catalytic domain.

Belongs to the glutamine synthetase family. Dodecamer. Interacts with BFSP2 and VIM. Expressed in lens.

Its function is as follows. May act as a component of the cytoskeleton or as a chaperone for the reorganization of intermediate filament proteins during terminal differentiation in the lens. Does not seem to have enzymatic activity. This Mus musculus (Mouse) protein is Lengsin (Lgsn).